The chain runs to 125 residues: uncharacterized protein (125 aa).

This is an uncharacterized protein from Pasteurella multocida (strain Pm70).